Reading from the N-terminus, the 239-residue chain is Ribosomal RNA small subunit methyltransferase G (239 aa).

S-adenosyl-L-methionine-binding positions include glycine 78, phenylalanine 83, 129-130 (AE), and arginine 148.

The protein belongs to the methyltransferase superfamily. RNA methyltransferase RsmG family.

The protein resides in the cytoplasm. Specifically methylates the N7 position of a guanine in 16S rRNA. The protein is Ribosomal RNA small subunit methyltransferase G of Clostridium botulinum (strain Okra / Type B1).